The sequence spans 88 residues: Phosphocarrier protein HPr (88 aa).

An HPr domain is found at 1–88 (MKKFQAVIKD…KACLEKNKVI (88 aa)). His15 functions as the Pros-phosphohistidine intermediate in the catalytic mechanism. The residue at position 47 (Ser47) is a Phosphoserine; by HPrK/P.

This sequence belongs to the HPr family.

Its subcellular location is the cytoplasm. Phosphorylation on Ser-47 inhibits the phosphoryl transfer from enzyme I to HPr. General (non sugar-specific) component of the phosphoenolpyruvate-dependent sugar phosphotransferase system (sugar PTS). This major carbohydrate active-transport system catalyzes the phosphorylation of incoming sugar substrates concomitantly with their translocation across the cell membrane. The phosphoryl group from phosphoenolpyruvate (PEP) is transferred to the phosphoryl carrier protein HPr by enzyme I. Phospho-HPr then transfers it to the PTS EIIA domain. In terms of biological role, P-Ser-HPr interacts with the catabolite control protein A (CcpA), forming a complex that binds to DNA at the catabolite response elements cre, operator sites preceding a large number of catabolite-regulated genes. Thus, P-Ser-HPr is a corepressor in carbon catabolite repression (CCR), a mechanism that allows bacteria to coordinate and optimize the utilization of available carbon sources. P-Ser-HPr also plays a role in inducer exclusion, in which it probably interacts with several non-PTS permeases and inhibits their transport activity. The polypeptide is Phosphocarrier protein HPr (ptsH) (Mycoplasma genitalium (strain ATCC 33530 / DSM 19775 / NCTC 10195 / G37) (Mycoplasmoides genitalium)).